Consider the following 428-residue polypeptide: Serine--tRNA ligase (428 aa).

An L-serine-binding site is contributed by 235 to 237; sequence TAE. 266-268 provides a ligand contact to ATP; it reads RSE. An L-serine-binding site is contributed by glutamate 289. ATP is bound at residue 353–356; the sequence is EISS. An L-serine-binding site is contributed by serine 389.

Belongs to the class-II aminoacyl-tRNA synthetase family. Type-1 seryl-tRNA synthetase subfamily. Homodimer. The tRNA molecule binds across the dimer.

The protein resides in the cytoplasm. It catalyses the reaction tRNA(Ser) + L-serine + ATP = L-seryl-tRNA(Ser) + AMP + diphosphate + H(+). It carries out the reaction tRNA(Sec) + L-serine + ATP = L-seryl-tRNA(Sec) + AMP + diphosphate + H(+). Its pathway is aminoacyl-tRNA biosynthesis; selenocysteinyl-tRNA(Sec) biosynthesis; L-seryl-tRNA(Sec) from L-serine and tRNA(Sec): step 1/1. Its function is as follows. Catalyzes the attachment of serine to tRNA(Ser). Is also able to aminoacylate tRNA(Sec) with serine, to form the misacylated tRNA L-seryl-tRNA(Sec), which will be further converted into selenocysteinyl-tRNA(Sec). The protein is Serine--tRNA ligase of Psychromonas ingrahamii (strain DSM 17664 / CCUG 51855 / 37).